Consider the following 1480-residue polypeptide: Tubulin-specific chaperone D (1480 aa).

Disordered stretches follow at residues methionine 1–glutamine 32 and asparagine 453–proline 476. Low complexity-rich tracts occupy residues isoleucine 7–glutamine 32 and asparagine 453–asparagine 463. Over residues asparagine 464–proline 476 the composition is skewed to acidic residues. An HEAT 1 repeat occupies isoleucine 482–valine 520. The disordered stretch occupies residues lysine 859–asparagine 880. The stretch at glutamate 886–tyrosine 922 is one HEAT 2 repeat. Residues asparagine 1437–isoleucine 1480 form a disordered region. Over residues aspartate 1444–aspartate 1468 the composition is skewed to low complexity. Acidic residues predominate over residues asparagine 1469 to isoleucine 1480.

Belongs to the TBCD family. As to quaternary structure, supercomplex made of cofactors A to E. Cofactors A and D function by capturing and stabilizing tubulin in a quasi-native conformation. Cofactor E binds to the cofactor D-tubulin complex; interaction with cofactor C then causes the release of tubulin polypeptides that are committed to the native state.

Functionally, tubulin-folding protein; involved in the first step of the tubulin folding pathway. This chain is Tubulin-specific chaperone D (tbcd), found in Dictyostelium discoideum (Social amoeba).